Consider the following 740-residue polypeptide: MATANSIIVLDDDDEDEAAAQPGPSHPLPNAASPGAEAPSSSEPHGARGSSSSGGKKCYKLENEKLFEEFLELCKMQTADHPEVVPFLYNRQQRAHSLFLASAEFCNILSRVLSRARSRPAKLYVYINELCTVLKAHSAKKKLNLAPAATTSNEPSGNNPPTHLSLDPTNAENTASQSPRTRGSRRQIQRLEQLLALYVAEIRRLQEKELDLSELDDPDSAYLQEARLKRKLIRLFGRLCELKDCSSLTGRVIEQRIPYRGTRYPEVNRRIERLINKPGPDTFPDYGDVLRAVEKAAARHSLGLPRQQLQLMAQDAFRDVGIRLQERRHLDLIYNFGCHLTDDYRPGVDPALSDPVLARRLRENRSLAMSRLDEVISKYAMLQDKSEEGERKKRRARLQGTSSHSADTPEASLDSGEGPSGMASQGCPSASRAETDDEDDEESDEEEEEEEEEEEEEATDSEEEEDLEQMQEGQEDDEEEDEEEEAAAGKDGDKSPMSSLQISNEKNLEPGKQISRSSGEQQNKGRIVSPSLLSEEPLAPSSIDAESNGEQPEELTLEEESPVSQLFELEIEALPLDTPSSVETDISSSRKQSEEPFTTVLENGAGMVSSTSFNGGVSPHNWGDSGPPCKKSRKEKKQTGSGPLGNSYVERQRSVHEKNGKKICTLPSPPSPLASLAPVADSSTRVDSPSHGLVTSSLCIPSPARLSQTPHSQPPRPGTCKTSVATQCDPEEIIVLSDSD.

The segment at 1–55 (MATANSIIVLDDDDEDEAAAQPGPSHPLPNAASPGAEAPSSSEPHGARGSSSSGG) is disordered. Residues 1–160 (MATANSIIVL…TSNEPSGNNP (160 aa)) are necessary for interaction with USP7 and ATRX. Residue Ser25 is modified to Phosphoserine. The segment covering 29–55 (PNAASPGAEAPSSSEPHGARGSSSSGG) has biased composition (low complexity). Residue Lys142 forms a Glycyl lysine isopeptide (Lys-Gly) (interchain with G-Cter in SUMO2) linkage. Residues 147 to 185 (PAATTSNEPSGNNPPTHLSLDPTNAENTASQSPRTRGSR) form a disordered region. The segment covering 149 to 181 (ATTSNEPSGNNPPTHLSLDPTNAENTASQSPRT) has biased composition (polar residues). Residues Ser178 and Ser213 each carry the phosphoserine modification. Coiled coils occupy residues 180 to 217 (RTRGSRRQIQRLEQLLALYVAEIRRLQEKELDLSELDD) and 358 to 399 (ARRL…ARLQ). The interaction with histone H3.3 stretch occupies residues 183–417 (GSRRQIQRLE…TPEASLDSGE (235 aa)). Residues 347 to 570 (GVDPALSDPV…SPVSQLFELE (224 aa)) are necessary for interaction with USP7. The disordered stretch occupies residues 384–724 (DKSEEGERKK…PRPGTCKTSV (341 aa)). A Nuclear localization signal motif is present at residues 391-395 (RKKRR). Ser412 and Ser424 each carry phosphoserine. The stretch at 430–489 (ASRAETDDEDDEESDEEEEEEEEEEEEEATDSEEEEDLEQMQEGQEDDEEEDEEEEAAAG) forms a coiled coil. Positions 435 to 486 (TDDEDDEESDEEEEEEEEEEEEEATDSEEEEDLEQMQEGQEDDEEEDEEEEA) are enriched in acidic residues. Position 459 is a phosphothreonine (Thr459). 2 positions are modified to phosphoserine: Ser495 and Ser498. A compositionally biased stretch (polar residues) spans 496–505 (PMSSLQISNE). The interval 501 to 625 (QISNEKNLEP…GVSPHNWGDS (125 aa)) is interaction with MAP3K5. Lys512 carries the post-translational modification N6-acetyllysine. Over residues 514-524 (ISRSSGEQQNK) the composition is skewed to polar residues. Residues 529–542 (SPSLLSEEPLAPSS) are compositionally biased toward low complexity. Positions 551-561 (QPEELTLEEES) are enriched in acidic residues. Residues Ser561 and Ser580 each carry the phosphoserine modification. The span at 578–590 (TPSSVETDISSSR) shows a compositional bias: polar residues. An interaction with SPOP region spans residues 626–740 (GPPCKKSRKE…EEIIVLSDSD (115 aa)). (Microbial infection) Interaction with Puumala hantavirus nucleoprotein regions lie at residues 627 to 634 (PPCKKSRK) and 658 to 663 (KNGKKI). A Nuclear localization signal motif is present at residues 628 to 634 (PCKKSRK). Glycyl lysine isopeptide (Lys-Gly) (interchain with G-Cter in SUMO1) cross-links involve residues Lys630 and Lys631. Residues 650–660 (ERQRSVHEKNG) show a composition bias toward basic and acidic residues. Phosphoserine is present on residues Ser668 and Ser671. Low complexity predominate over residues 673–683 (LASLAPVADSS). Residues Ser688, Ser702, Ser737, and Ser739 each carry the phosphoserine modification. Polar residues predominate over residues 693–711 (LVTSSLCIPSPARLSQTPH). A sumo interaction motif (SIM) region spans residues 733-740 (IIVLSDSD).

It belongs to the DAXX family. Homomultimer. Interacts (via C-terminus) with TNFRSF6 (via death domain). Interacts with PAX5, SLC2A4/GLUT4, MAP3K5, TGFBR2, phosphorylated dimeric HSPB1/HSP27, CENPC, ETS1, sumoylated PML, UBE2I, MCRS1 and TP53. Interacts (via N-terminus) with HIPK2 and HIPK3. Interacts with HIPK1, which induces translocation from PML/POD/ND10 nuclear bodies to chromatin and enhances association with HDAC1. Interacts (non-phosphorylated) with PAX3, PAX7, DEK, HDAC1, HDAC2, HDAC3, acetylated histone H4 and histones H2A, H2B, H3, H3.3 and H4. Interacts with SPOP; mediating CUL3-dependent proteasomal degradation. Interacts with CBP; the interaction is dependent the sumoylation of CBP and suppresses CBP transcriptional activity via recruitment of HDAC2 directly in the complex with TP53 and HIPK2. Interacts with AXIN1; the interaction stimulates the interaction of DAXX with TP53, stimulates 'Ser-46' phosphorylation of TP53 on and induces cell death on UV irradiation. Interacts with MDM2; the interaction is direct. Interacts with USP7; the interaction is direct and independent of MDM2 and TP53. Part of a complex with DAXX, MDM2 and USP7 under non-stress conditions. Interacts (via N-terminus) with RASSF1 (via C-terminus); the interaction is independent of MDM2 and TP53; RASSF1 isoform A disrupts interactions among MDM2, DAXX and USP7, thus contributing to the efficient activation of TP53 by promoting MDM2 self-ubiquitination in cell-cycle checkpoint control in response to DNA damage. Interacts with ATRX to form the chromatin remodeling complex ATRX:DAXX. Interacts with HSF1 (via homotrimeric form preferentially); this interaction relieves homotrimeric HSF1 from repression of its transcriptional activity by HSP90-dependent multichaperone complex upon heat shock. Interacts with SUMO1P1/SUMO5. In terms of assembly, (Microbial infection) Interacts with human cytomegalovirus/HHV-5 tegument phosphoprotein pp71 and protein UL123. As to quaternary structure, (Microbial infection) Interacts with Epstein-Barr virus protein BNRF1. (Microbial infection) Interacts with human adenovirus 5 E1B-55K protein; this interaction might alterate the normal interactions of DAXX, PML, and TP53, which may contribute to cell transformation. In terms of assembly, (Microbial infection) Interacts with Puumala hantavirus nucleoprotein. In terms of processing, sumoylated with SUMO1 on multiple lysine residues. Post-translationally, phosphorylated by HIPK1 upon glucose deprivation. Polyubiquitinated; which is promoted by CUL3 and SPOP and results in proteasomal degradation. Ubiquitinated by MDM2; inducing its degradation. Deubiquitinated by USP7; leading to stabilize it. Ubiquitous.

Its subcellular location is the cytoplasm. It localises to the nucleus. The protein resides in the nucleoplasm. It is found in the PML body. The protein localises to the nucleolus. Its subcellular location is the chromosome. It localises to the centromere. In terms of biological role, transcription corepressor known to repress transcriptional potential of several sumoylated transcription factors. Down-regulates basal and activated transcription. Its transcription repressor activity is modulated by recruiting it to subnuclear compartments like the nucleolus or PML/POD/ND10 nuclear bodies through interactions with MCSR1 and PML, respectively. Seems to regulate transcription in PML/POD/ND10 nuclear bodies together with PML and may influence TNFRSF6-dependent apoptosis thereby. Inhibits transcriptional activation of PAX3 and ETS1 through direct protein-protein interactions. Modulates PAX5 activity; the function seems to involve CREBBP. Acts as an adapter protein in a MDM2-DAXX-USP7 complex by regulating the RING-finger E3 ligase MDM2 ubiquitination activity. Under non-stress condition, in association with the deubiquitinating USP7, prevents MDM2 self-ubiquitination and enhances the intrinsic E3 ligase activity of MDM2 towards TP53, thereby promoting TP53 ubiquitination and subsequent proteasomal degradation. Upon DNA damage, its association with MDM2 and USP7 is disrupted, resulting in increased MDM2 autoubiquitination and consequently, MDM2 degradation, which leads to TP53 stabilization. Acts as a histone chaperone that facilitates deposition of histone H3.3. Acts as a targeting component of the chromatin remodeling complex ATRX:DAXX which has ATP-dependent DNA translocase activity and catalyzes the replication-independent deposition of histone H3.3 in pericentric DNA repeats outside S-phase and telomeres, and the in vitro remodeling of H3.3-containing nucleosomes. Does not affect the ATPase activity of ATRX but alleviates its transcription repression activity. Upon neuronal activation associates with regulatory elements of selected immediate early genes where it promotes deposition of histone H3.3 which may be linked to transcriptional induction of these genes. Required for the recruitment of histone H3.3:H4 dimers to PML-nuclear bodies (PML-NBs); the process is independent of ATRX and facilitated by ASF1A; PML-NBs are suggested to function as regulatory sites for the incorporation of newly synthesized histone H3.3 into chromatin. In case of overexpression of centromeric histone variant CENPA (as found in various tumors) is involved in its mislocalization to chromosomes; the ectopic localization involves a heterotypic tetramer containing CENPA, and histones H3.3 and H4 and decreases binding of CTCF to chromatin. Proposed to mediate activation of the JNK pathway and apoptosis via MAP3K5 in response to signaling from TNFRSF6 and TGFBR2. Interaction with HSPB1/HSP27 may prevent interaction with TNFRSF6 and MAP3K5 and block DAXX-mediated apoptosis. In contrast, in lymphoid cells JNC activation and TNFRSF6-mediated apoptosis may not involve DAXX. Shows restriction activity towards human cytomegalovirus (HCMV). Plays a role as a positive regulator of the heat shock transcription factor HSF1 activity during the stress protein response. This chain is Death domain-associated protein 6 (DAXX), found in Homo sapiens (Human).